The primary structure comprises 427 residues: 3-phosphoshikimate 1-carboxyvinyltransferase (427 aa).

The 3-phosphoshikimate site is built by Lys-22, Ser-23, and Arg-27. A phosphoenolpyruvate-binding site is contributed by Lys-22. Positions 96 and 124 each coordinate phosphoenolpyruvate. 3-phosphoshikimate-binding residues include Ser-169, Ser-170, Gln-171, Ser-197, Asp-313, Asn-336, and Lys-340. Gln-171 lines the phosphoenolpyruvate pocket. Residue Asp-313 is the Proton acceptor of the active site. Phosphoenolpyruvate-binding residues include Arg-344, Arg-386, and Lys-411.

The protein belongs to the EPSP synthase family. Monomer.

It localises to the cytoplasm. It catalyses the reaction 3-phosphoshikimate + phosphoenolpyruvate = 5-O-(1-carboxyvinyl)-3-phosphoshikimate + phosphate. The protein operates within metabolic intermediate biosynthesis; chorismate biosynthesis; chorismate from D-erythrose 4-phosphate and phosphoenolpyruvate: step 6/7. Its function is as follows. Catalyzes the transfer of the enolpyruvyl moiety of phosphoenolpyruvate (PEP) to the 5-hydroxyl of shikimate-3-phosphate (S3P) to produce enolpyruvyl shikimate-3-phosphate and inorganic phosphate. This is 3-phosphoshikimate 1-carboxyvinyltransferase from Salmonella schwarzengrund (strain CVM19633).